The following is a 304-amino-acid chain: Acetyl-coenzyme A carboxylase carboxyl transferase subunit beta (304 aa).

The CoA carboxyltransferase N-terminal domain occupies 23–292 (VWTKCDSCGQ…PNPEAPREGV (270 aa)). Zn(2+)-binding residues include Cys-27, Cys-30, Cys-46, and Cys-49. Residues 27–49 (CDSCGQVLYRAELERNLEVCPKC) form a C4-type zinc finger. Residues 284–304 (NPEAPREGVVVPPVPDQEPEA) form a disordered region. Over residues 295-304 (PPVPDQEPEA) the composition is skewed to pro residues.

The protein belongs to the AccD/PCCB family. In terms of assembly, acetyl-CoA carboxylase is a heterohexamer composed of biotin carboxyl carrier protein (AccB), biotin carboxylase (AccC) and two subunits each of ACCase subunit alpha (AccA) and ACCase subunit beta (AccD). Zn(2+) serves as cofactor.

It localises to the cytoplasm. The catalysed reaction is N(6)-carboxybiotinyl-L-lysyl-[protein] + acetyl-CoA = N(6)-biotinyl-L-lysyl-[protein] + malonyl-CoA. Its pathway is lipid metabolism; malonyl-CoA biosynthesis; malonyl-CoA from acetyl-CoA: step 1/1. In terms of biological role, component of the acetyl coenzyme A carboxylase (ACC) complex. Biotin carboxylase (BC) catalyzes the carboxylation of biotin on its carrier protein (BCCP) and then the CO(2) group is transferred by the transcarboxylase to acetyl-CoA to form malonyl-CoA. This Shigella flexneri protein is Acetyl-coenzyme A carboxylase carboxyl transferase subunit beta.